The sequence spans 472 residues: 7-dimethylallyltryptophan synthase hasE (472 aa).

Residue Glu-138 coordinates L-tryptophan. Arg-154, Lys-239, Tyr-241, Lys-313, Tyr-315, Tyr-393, Tyr-460, and Tyr-464 together coordinate dimethylallyl diphosphate.

Belongs to the tryptophan dimethylallyltransferase family. Homodimer.

It catalyses the reaction L-tryptophan + dimethylallyl diphosphate = 7-(3-methylbut-2-enyl)-L-tryptophan + diphosphate. It carries out the reaction an N-terminal L-tryptophanyl-L-alpha-aminoacyl-[peptide] + H2O = an N-terminal L-alpha-aminoacyl-[peptide] + L-tryptophan. The protein operates within secondary metabolite biosynthesis. Functionally, 7-dimethylallyltryptophan synthase; part of the gene cluster that mediates the biosynthesis of hexadehydro-astechrome (HAS), a tryptophan-derived iron(III)-complex that acts as a virulence factor in infected mice. Catalyzes the prenylation of L-tryptophan at the C-7 position of the indole moiety. The enzyme is specific for dimethylallyl diphosphate (DMAPP) as prenyl donor. Also accepts D-tryptophan, typtophan-derivatives with modifications at the side chain or the indole ring, and linear and cyclic dipeptides such as H-L-Trp-L-Gly-OH or cyclo-L-Trp-L-Gly as substrates, however with lower efficiency. Also has tryptophan aminopeptidase activity towards linear peptides with a tryptophanyl moiety at the N-terminus. Dipeptides are better substrates than peptides with 3 or more amino acids. Enzymatic rate constants however are much higher for the prenyltransferase activity than for the aminopeptidase activity. Within the hexadehydro-astechrome biosyntetic pathway, hasE catalyzes the prenylation of the hasD-tethered tryptophan or the resulting tethered Trp-Ala dipeptid. The HAS biosynthesis begins with the synthesis of a tethered Trp-Ala dipeptide by the NRPS hasD. The 7-dimethylallyltryptophan synthase hasE then catalyzes the prenylation of the hasD-tethered tryptophan or the resulting tethered Trp-Ala dipeptide at the C-7 position of the indole moiety. HAS biosynthesis continues via tethered intermediates with the succesive actions of the cytochrome P450 monooxygenase hasH, the O-methyltransferase hasC, and the FAD-linked oxidoreductase hasG. The resulting O-methylated diketopiperazine is then released from hasD. Finally, three O-methylated diketopiperazine molecules assemble in a trimeric complex with Fe(III) to produce hexadehydro-astechrome. This Aspergillus fumigatus (strain CBS 144.89 / FGSC A1163 / CEA10) (Neosartorya fumigata) protein is 7-dimethylallyltryptophan synthase hasE.